Reading from the N-terminus, the 105-residue chain is N(4)-acetylcytidine amidohydrolase (105 aa).

The 87-residue stretch at 7 to 93 folds into the ASCH domain; the sequence is TFFERFEHDI…VIAEIYPGLE (87 aa). Residue lysine 21 is the Proton acceptor of the active site. Threonine 24 serves as the catalytic Nucleophile. Glutamate 74 (proton donor) is an active-site residue.

This sequence belongs to the N(4)-acetylcytidine amidohydrolase family.

It catalyses the reaction N(4)-acetylcytidine + H2O = cytidine + acetate + H(+). The enzyme catalyses N(4)-acetyl-2'-deoxycytidine + H2O = 2'-deoxycytidine + acetate + H(+). The catalysed reaction is N(4)-acetylcytosine + H2O = cytosine + acetate + H(+). Functionally, catalyzes the hydrolysis of N(4)-acetylcytidine (ac4C). The sequence is that of N(4)-acetylcytidine amidohydrolase from Shewanella baltica (strain OS185).